The sequence spans 197 residues: ATP-dependent Clp protease proteolytic subunit 1 (197 aa).

The active-site Nucleophile is S88. The active site involves H113.

The protein belongs to the peptidase S14 family. Fourteen ClpP subunits assemble into 2 heptameric rings which stack back to back to give a disk-like structure with a central cavity, resembling the structure of eukaryotic proteasomes.

It is found in the cytoplasm. It catalyses the reaction Hydrolysis of proteins to small peptides in the presence of ATP and magnesium. alpha-casein is the usual test substrate. In the absence of ATP, only oligopeptides shorter than five residues are hydrolyzed (such as succinyl-Leu-Tyr-|-NHMec, and Leu-Tyr-Leu-|-Tyr-Trp, in which cleavage of the -Tyr-|-Leu- and -Tyr-|-Trp bonds also occurs).. Cleaves peptides in various proteins in a process that requires ATP hydrolysis. Has a chymotrypsin-like activity. Plays a major role in the degradation of misfolded proteins. The chain is ATP-dependent Clp protease proteolytic subunit 1 from Leifsonia xyli subsp. xyli (strain CTCB07).